The primary structure comprises 324 residues: Nidogen-1 (324 aa).

The NIDO domain maps to 16–178 (PFLADLDTTD…GVWVFEIGSP (163 aa)). Asn-97 is a glycosylation site (N-linked (GlcNAc...) asparagine). 2 positions are modified to sulfotyrosine: Tyr-200 and Tyr-205. Residues 219–259 (TQPFPSHSPRRGYPDPHNVPRTLAPSYEATERPHGIPTERT) are disordered. Basic and acidic residues predominate over residues 247-259 (ATERPHGIPTERT). The region spanning 295–324 (SQQTCANNRHQCSVHAECRDYATGFCCRCV) is the EGF-like domain. Disulfide bonds link Cys-299–Cys-312 and Cys-306–Cys-321.

In terms of assembly, interacts with FBLN1. Interacts with LGALS3BP. Interacts with PLXDC1. Interacts with SVEP1. Post-translationally, N- and O-glycosylated.

Its subcellular location is the secreted. It is found in the extracellular space. The protein resides in the extracellular matrix. The protein localises to the basement membrane. In terms of biological role, sulfated glycoprotein widely distributed in basement membranes and tightly associated with laminin. Also binds to collagen IV and perlecan. It probably has a role in cell-extracellular matrix interactions. This Rattus norvegicus (Rat) protein is Nidogen-1 (Nid1).